We begin with the raw amino-acid sequence, 128 residues long: Glycine cleavage system H protein (128 aa).

The Lipoyl-binding domain maps to 23–105 (KVRIGITDFA…YEKAWMIVVE (83 aa)). Residue K64 is modified to N6-lipoyllysine.

Belongs to the GcvH family. As to quaternary structure, the glycine cleavage system is composed of four proteins: P, T, L and H. (R)-lipoate serves as cofactor.

Its function is as follows. The glycine cleavage system catalyzes the degradation of glycine. The H protein shuttles the methylamine group of glycine from the P protein to the T protein. In terms of biological role, is also involved in protein lipoylation via its role as an octanoyl/lipoyl carrier protein intermediate. The polypeptide is Glycine cleavage system H protein (Halalkalibacterium halodurans (strain ATCC BAA-125 / DSM 18197 / FERM 7344 / JCM 9153 / C-125) (Bacillus halodurans)).